Consider the following 416-residue polypeptide: Phakinin (416 aa).

The segment at 1–48 (MSERRVAMDLPSGSNASMPLQRHRVSSLRGTRSPSSLDSPPASRTSAV) is disordered. N-acetylserine is present on S2. Residues 2–115 (SERRVAMDLP…HATAEDLGGC (114 aa)) are head. Phosphoserine is present on residues S27, S33, S36, and S91. Polar residues predominate over residues 28–48 (LRGTRSPSSLDSPPASRTSAV). An IF rod domain is found at 105-416 (NHATAEDLGG…HALLDREESN (312 aa)). Coiled-coil stretches lie at residues 199 to 240 (FRKA…SLSR) and 314 to 391 (LAAA…ERAH). Residues 397–416 (GQLQKDVASYHALLDREESN) form a tail region.

The protein belongs to the intermediate filament family. Part of a complex required for lens intermediate filament formation composed of BFSP1, BFSP2, and CRYAA. Found in a complex composed of PPL (via C-terminal linker domain), BFSP1 and BFSP2 in the retinal lens. Within the complex interacts with PPL (via C-terminal linker domain) and with BFSP1. Identified in a complex that contains VIM, EZR, AHNAK, BFSP1, BFSP2, ANK2, PLEC, PRX and spectrin. Interacts with LGSN. Interacts with VIM. In terms of tissue distribution, expressed in the deep and shallow cortices of the retina lens (at protein level).

The protein resides in the cell membrane. It localises to the cytoplasm. It is found in the cytoskeleton. Its subcellular location is the cell cortex. Its function is as follows. Required for the correct formation of lens intermediate filaments as part of a complex composed of BFSP1, BFSP2 and CRYAA. Plays a role in maintenance of retinal lens optical clarity. The polypeptide is Phakinin (Rattus norvegicus (Rat)).